A 230-amino-acid chain; its full sequence is Sugar fermentation stimulation protein homolog (230 aa).

Belongs to the SfsA family.

This chain is Sugar fermentation stimulation protein homolog, found in Clostridium kluyveri (strain NBRC 12016).